The primary structure comprises 1320 residues: Transcriptional activator MN1 (1320 aa).

M1 is subject to N-acetylmethionine. 9 disordered regions span residues 1–26 (MFGL…FNET), 92–121 (FGGQ…FGGP), 147–219 (PPFA…SLEP), 231–411 (LEYN…EYPI), 423–442 (SEPV…NQRL), 474–615 (NGSM…AGRL), 629–819 (SAWF…KDNL), 840–1150 (GAPN…PDEI), and 1247–1273 (PWEK…SASQ). A compositionally biased stretch (basic residues) spans 98–113 (HHGHPGSHHPHQHHPH). Composition is skewed to low complexity over residues 202–214 (SFHG…GSDS) and 291–309 (QPPQ…QQQQ). The segment covering 338–366 (MQPPQQAPPPPQQQPPQQPPQQQPPPPPG) has biased composition (pro residues). Residues 498-514 (FTPPVPDSFPSGPPLQH) are compositionally biased toward pro residues. 2 stretches are compositionally biased toward low complexity: residues 523 to 550 (QQQQ…QQQQ) and 564 to 578 (RNQQ…LAQL). Composition is skewed to gly residues over residues 582 to 596 (GDVG…GPVG) and 701 to 710 (QFGGSLGGLG). Residues 759–768 (SGPGVNSPPS) show a composition bias toward low complexity. Residues 769-784 (AGGGGGSSGGGGGGGA) are compositionally biased toward gly residues. Low complexity-rich tracts occupy residues 798-809 (SASKLGALSLGS) and 895-905 (GTSSSGSKASG). Positions 914–930 (DGTSLSPNYTLESTSGN) are enriched in polar residues. Phosphoserine is present on residues S950 and S954. Low complexity predominate over residues 973–984 (GVSPGQQQASGA). At S1007 the chain carries Phosphoserine. Residues 1048–1066 (EVSTSYANEDEVSSSSDNP) are compositionally biased toward polar residues. A Phosphoserine modification is found at S1081. Positions 1118-1128 (YGGGGGPGHPG) are enriched in gly residues.

As to quaternary structure, interacts with PBX1, PKNOX1, ZBTB24, E2F7, RING1. In terms of tissue distribution, widely expressed in fetal and adult tissues. Highest expression is observed in fetal brain and skeletal muscle, and adult skeletal muscle.

It localises to the nucleus. Transcriptional activator which specifically regulates expression of TBX22 in the posterior region of the developing palate. Required during later stages of palate development for growth and medial fusion of the palatal shelves. Promotes maturation and normal function of calvarial osteoblasts, including expression of the osteoclastogenic cytokine TNFSF11/RANKL. Necessary for normal development of the membranous bones of the skull. May play a role in tumor suppression. This is Transcriptional activator MN1 (MN1) from Homo sapiens (Human).